The primary structure comprises 603 residues: Geraniol synthase, chloroplastic (603 aa).

A chloroplast-targeting transit peptide spans 1-50; sequence MALQMIAPFLSSFLPNPRHSLAAHGLTHQKCVSKHISCSTTTPTYSTTVP. Residues Arg-301, Asp-338, Asp-342, Arg-479, and Asp-482 each contribute to the (2E)-geranyl diphosphate site. Residues Asp-338 and Asp-342 each coordinate Mg(2+). Positions 338–342 match the DDXXD motif motif; it reads DDIYD. The Mg(2+) site is built by Asp-482, Thr-486, and Glu-490.

The protein belongs to the terpene synthase family. Tpsb subfamily. In terms of assembly, homodimer. Requires Mg(2+) as cofactor. Mn(2+) serves as cofactor. In terms of tissue distribution, expressed in the oil cells of the leaves.

It localises to the plastid. The protein resides in the chloroplast. It carries out the reaction (2E)-geranyl diphosphate + H2O = (2E)-geraniol + diphosphate. The protein operates within secondary metabolite biosynthesis; terpenoid biosynthesis. Functionally, monoterpene synthase that catalyzes the formation of geraniol from geranyl diphosphate. This chain is Geraniol synthase, chloroplastic (GerS), found in Cinnamomum tenuipile (Alseodaphne mollis).